A 382-amino-acid polypeptide reads, in one-letter code: MKALHFGAGNIGRGFIGKLLADAGVQLTFADVNQAVLDALNARGTYPVHVVGEQAQIEIVNGVNAVHSSSDDIIALIAEVDIVTTAVGPQILERIAAGMAQGIAKRSDNANSRPLNIIACENMVRGTTQLKAHVLKALPERYHAWLEEHVGFVDSAVDRIVPPSAADSSDPLEVTVETFSEWIVDKTQFKGEPPTIPGMELTDNLMAFVERKLFTLNTGHAIAAYLGQLAGHKTIREAIMDKKVRAIVQGAMEESGAVLIKRYGFAADKHAAYIQKIINRFENPYLIDDVERVGRQPLRKLSAGDRLIKPTLGTLEYHLPNNNLVTGIAAALLYRNEGDPQAIELAGLLSRQDVATTLVHISGLDKDSDVVKAVVKAVNALA.

Position 3–14 (3–14 (ALHFGAGNIGRG)) interacts with NAD(+).

Belongs to the mannitol dehydrogenase family.

The enzyme catalyses D-mannitol 1-phosphate + NAD(+) = beta-D-fructose 6-phosphate + NADH + H(+). This Erwinia tasmaniensis (strain DSM 17950 / CFBP 7177 / CIP 109463 / NCPPB 4357 / Et1/99) protein is Mannitol-1-phosphate 5-dehydrogenase.